A 546-amino-acid chain; its full sequence is Chaperonin GroEL (546 aa).

ATP is bound by residues 30–33, K51, 87–91, G415, 479–481, and D495; these read TLGP, DGTTT, and NAA.

It belongs to the chaperonin (HSP60) family. In terms of assembly, forms a cylinder of 14 subunits composed of two heptameric rings stacked back-to-back. Interacts with the co-chaperonin GroES.

The protein resides in the cytoplasm. The catalysed reaction is ATP + H2O + a folded polypeptide = ADP + phosphate + an unfolded polypeptide.. In terms of biological role, together with its co-chaperonin GroES, plays an essential role in assisting protein folding. The GroEL-GroES system forms a nano-cage that allows encapsulation of the non-native substrate proteins and provides a physical environment optimized to promote and accelerate protein folding. The chain is Chaperonin GroEL from Paraburkholderia phytofirmans (strain DSM 17436 / LMG 22146 / PsJN) (Burkholderia phytofirmans).